Reading from the N-terminus, the 230-residue chain is MMLKTVLRLPVCAALLALAAGCAMIPPEPVVTGPLTAPPPPPPQPSARPNGSIYQPSAYGNYPLFEDRRPRNVGDIVTIVLEEKTNAAKGVATNTSRDGSATLGVAAAPRFMDGVINDKLDTDISGGNTANGTGKSSANNTFTGTITTTVIGVLPNGNLQIAGEKQIAINRGSEYVRFSGVVDPRSITGSNTVSSTRVADARIEYRSKGVMDEVQTMGWLQRFFLIASPF.

Positions 1 to 21 are cleaved as a signal peptide; sequence MMLKTVLRLPVCAALLALAAG. The N-palmitoyl cysteine moiety is linked to residue C22. The S-diacylglycerol cysteine moiety is linked to residue C22. Residues 34 to 53 form a disordered region; it reads PLTAPPPPPPQPSARPNGSI. Over residues 36–46 the composition is skewed to pro residues; it reads TAPPPPPPQPS.

It belongs to the FlgH family. In terms of assembly, the basal body constitutes a major portion of the flagellar organelle and consists of four rings (L,P,S, and M) mounted on a central rod.

Its subcellular location is the cell outer membrane. The protein localises to the bacterial flagellum basal body. Assembles around the rod to form the L-ring and probably protects the motor/basal body from shearing forces during rotation. The polypeptide is Flagellar L-ring protein (Bordetella parapertussis (strain 12822 / ATCC BAA-587 / NCTC 13253)).